A 276-amino-acid polypeptide reads, in one-letter code: Large ribosomal subunit protein uL2 (276 aa).

The interval 221-276 (RGSAMNPNDHPHGGGEGRAPIGRKSPMTPWGKKARGIKTRDRKKSSNELIIRRRTK) is disordered. A compositionally biased stretch (basic residues) spans 252–263 (KKARGIKTRDRK).

This sequence belongs to the universal ribosomal protein uL2 family. In terms of assembly, part of the 50S ribosomal subunit. Forms a bridge to the 30S subunit in the 70S ribosome.

Its function is as follows. One of the primary rRNA binding proteins. Required for association of the 30S and 50S subunits to form the 70S ribosome, for tRNA binding and peptide bond formation. It has been suggested to have peptidyltransferase activity; this is somewhat controversial. Makes several contacts with the 16S rRNA in the 70S ribosome. The protein is Large ribosomal subunit protein uL2 of Phytoplasma australiense.